The sequence spans 126 residues: Large ribosomal subunit protein uL22c (126 aa).

Belongs to the universal ribosomal protein uL22 family. As to quaternary structure, part of the 50S ribosomal subunit.

It localises to the plastid. The protein localises to the chloroplast. Its function is as follows. This protein binds specifically to 23S rRNA. Functionally, the globular domain of the protein is located near the polypeptide exit tunnel on the outside of the subunit, while an extended beta-hairpin is found that lines the wall of the exit tunnel in the center of the 70S ribosome. In Cryptomeria japonica (Japanese cedar), this protein is Large ribosomal subunit protein uL22c (rpl22).